The sequence spans 90 residues: Co-chaperonin GroES (90 aa).

This sequence belongs to the GroES chaperonin family. In terms of assembly, heptamer of 7 subunits arranged in a ring. Interacts with the chaperonin GroEL.

It is found in the cytoplasm. Its function is as follows. Together with the chaperonin GroEL, plays an essential role in assisting protein folding. The GroEL-GroES system forms a nano-cage that allows encapsulation of the non-native substrate proteins and provides a physical environment optimized to promote and accelerate protein folding. GroES binds to the apical surface of the GroEL ring, thereby capping the opening of the GroEL channel. The chain is Co-chaperonin GroES from Phocaeicola vulgatus (strain ATCC 8482 / DSM 1447 / JCM 5826 / CCUG 4940 / NBRC 14291 / NCTC 11154) (Bacteroides vulgatus).